The chain runs to 155 residues: Small ribosomal subunit protein uS7c (155 aa).

This sequence belongs to the universal ribosomal protein uS7 family. In terms of assembly, part of the 30S ribosomal subunit.

The protein resides in the plastid. It localises to the chloroplast. Functionally, one of the primary rRNA binding proteins, it binds directly to 16S rRNA where it nucleates assembly of the head domain of the 30S subunit. This Schisandra chinensis (Chinese magnolia vine) protein is Small ribosomal subunit protein uS7c (rps7).